A 591-amino-acid chain; its full sequence is Peroxisome assembly protein 2 (591 aa).

Residues 1 to 78 (MSDSDPKPTA…TNIDTNNNTN (78 aa)) are disordered. Over 1–148 (MSDSDPKPTA…TSREGTRPAF (148 aa)) the chain is Peroxisomal matrix. Low complexity predominate over residues 7 to 26 (KPTAAKGAAPTSIPNSTRNP). A compositionally biased stretch (pro residues) spans 27–54 (NPTPPNPNPNPNPISTPAPTPTATPSPP). Low complexity predominate over residues 55–78 (IASSSNNGNNSTRSTNIDTNNNTN). The helical transmembrane segment at 149–175 (RVGQVDAELLDEELVELLRGQVREALR) threads the bilayer. The Cytoplasmic segment spans residues 176 to 196 (YVGGGGGGGGGGGGGGVGSGV). Residues 197 to 222 (AQDWEAEISLALRAVLFKLTVWDHDA) form a helical membrane-spanning segment. At 223-246 (TYGAALQNLKYTDARRDGPALAPP) the chain is on the peroxisomal matrix side. The helical transmembrane segment at 247–273 (SRWQKALYGLVTVGGRYLWAKWEDWLL) threads the bilayer. Topologically, residues 274–283 (EQDDGFEGPS) are cytoplasmic. A helical transmembrane segment spans residues 284-314 (PRVKRLARWTSALSTLHASAALVSFLVFLLH). The Peroxisomal matrix segment spans residues 315 to 341 (GRYRTLLDRLLRMRLAPPTSQVSREVS). A helical transmembrane segment spans residues 342 to 365 (FEYLNRQLVWHAFTEFLLFVLPLV). At 366-591 (GINRWRRWLA…EDGLDEDPES (226 aa)) the chain is on the cytoplasmic side. Cys408, Cys411, Cys449, Cys451, Cys454, Cys457, Cys472, and Cys475 together coordinate Zn(2+). Residues 408–475 (CAICYRDQNS…EGEGWPCLRC (68 aa)) form an RING-type; atypical zinc finger. The tract at residues 512–591 (KAPSDHEEEE…EDGLDEDPES (80 aa)) is disordered. Composition is skewed to acidic residues over residues 517–537 (HEEE…ENEG) and 575–591 (SEDY…DPES).

It belongs to the pex2/pex10/pex12 family. As to quaternary structure, component of the PEX2-PEX10-PEX12 retrotranslocation channel, composed of PEX2, PEX10 and PEX12.

It is found in the peroxisome membrane. The catalysed reaction is [E2 ubiquitin-conjugating enzyme]-S-ubiquitinyl-L-cysteine + [acceptor protein]-L-cysteine = [E2 ubiquitin-conjugating enzyme]-L-cysteine + [acceptor protein]-S-ubiquitinyl-L-cysteine.. It functions in the pathway protein modification; protein ubiquitination. In terms of biological role, E3 ubiquitin-protein ligase component of a retrotranslocation channel required for peroxisome organization by mediating export of the PEX5 receptor from peroxisomes to the cytosol, thereby promoting PEX5 recycling. The retrotranslocation channel is composed of PEX2, PEX10 and PEX12; each subunit contributing transmembrane segments that coassemble into an open channel that specifically allows the passage of PEX5 through the peroxisomal membrane. PEX2 also regulates peroxisome organization by acting as a E3 ubiquitin-protein ligase. PEX2 ubiquitinates PEX5 during its passage through the retrotranslocation channel: catalyzes monoubiquitination of PEX5 at 'Cys-6', a modification that acts as a signal for PEX5 extraction into the cytosol. This chain is Peroxisome assembly protein 2, found in Thermothelomyces thermophilus (strain ATCC 42464 / BCRC 31852 / DSM 1799) (Sporotrichum thermophile).